Reading from the N-terminus, the 347-residue chain is uncharacterized protein (347 aa).

2 coiled-coil regions span residues 148–201 (DQQS…EKDG) and 261–298 (LENLTFRLNLINDLNKKEEEKEKEKEKEKEENSFDTFS). Residues 151–203 (SISNLRKEEKEKQKENENENENENENENENEKENQELDKKVNQTNDNEKDGDE) form a disordered region. Basic and acidic residues predominate over residues 155–167 (LRKEEKEKQKENE). Residues 168-178 (NENENENENEN) show a composition bias toward acidic residues. Positions 179 to 191 (ENEKENQELDKKV) are enriched in basic and acidic residues.

This is an uncharacterized protein from Dictyostelium discoideum (Social amoeba).